The chain runs to 252 residues: Flap endonuclease Xni (252 aa).

D105 contributes to the Mg(2+) binding site. One can recognise a 5'-3' exonuclease domain in the interval 161-251 (VESTQFIDYL…NVNLKQFRIE (91 aa)). L172, A173, P181, V183, and I186 together coordinate K(+). Residues 185–190 (GIGPKS) form an interaction with DNA region.

This sequence belongs to the Xni family. Mg(2+) is required as a cofactor. It depends on K(+) as a cofactor.

Its function is as follows. Has flap endonuclease activity. During DNA replication, flap endonucleases cleave the 5'-overhanging flap structure that is generated by displacement synthesis when DNA polymerase encounters the 5'-end of a downstream Okazaki fragment. The sequence is that of Flap endonuclease Xni from Shewanella halifaxensis (strain HAW-EB4).